Reading from the N-terminus, the 90-residue chain is Probable Fe(2+)-trafficking protein (90 aa).

Belongs to the Fe(2+)-trafficking protein family.

Functionally, could be a mediator in iron transactions between iron acquisition and iron-requiring processes, such as synthesis and/or repair of Fe-S clusters in biosynthetic enzymes. This chain is Probable Fe(2+)-trafficking protein, found in Colwellia psychrerythraea (strain 34H / ATCC BAA-681) (Vibrio psychroerythus).